The chain runs to 514 residues: Activin receptor type-2A (514 aa).

Residues 1–20 (MGAATKLAFAVFLISCSSAG) form the signal peptide. At 21 to 136 (SILGRSETKE…TSNPVTTKPP (116 aa)) the chain is on the extracellular side. Intrachain disulfides connect Cys-31/Cys-61, Cys-51/Cys-79, Cys-86/Cys-105, Cys-92/Cys-104, and Cys-106/Cys-111. Asn-46, Asn-67, and Asn-88 each carry an N-linked (GlcNAc...) asparagine glycan. Residues 137-162 (LFNTLLYSLVPIMVVAVIVLFSFWMY) form a helical membrane-spanning segment. Over 163 to 514 (RHHKLAYPPV…VDFPPKESSL (352 aa)) the chain is Cytoplasmic. The 294-residue stretch at 193-486 (LQLLEVKARG…EERIIQMQKL (294 aa)) folds into the Protein kinase domain. ATP is bound by residues 199–207 (KARGRFGCV) and Lys-220. Asp-323 acts as the Proton acceptor in catalysis.

The protein belongs to the protein kinase superfamily. TKL Ser/Thr protein kinase family. TGFB receptor subfamily.

The protein resides in the cell membrane. It carries out the reaction L-threonyl-[receptor-protein] + ATP = O-phospho-L-threonyl-[receptor-protein] + ADP + H(+). It catalyses the reaction L-seryl-[receptor-protein] + ATP = O-phospho-L-seryl-[receptor-protein] + ADP + H(+). In terms of biological role, receptor for activin A, activin B and inhibin A. Involved in transmembrane signaling. The sequence is that of Activin receptor type-2A (acvr2a) from Xenopus laevis (African clawed frog).